The primary structure comprises 188 residues: uncharacterized protein (188 aa).

An L5-specific motif motif is present at residues isoleucine 62 to lysine 77.

The protein localises to the mitochondrion. This is an uncharacterized protein from Dictyostelium discoideum (Social amoeba).